The chain runs to 157 residues: Putative pre-16S rRNA nuclease (157 aa).

It belongs to the YqgF nuclease family.

It is found in the cytoplasm. Could be a nuclease involved in processing of the 5'-end of pre-16S rRNA. The sequence is that of Putative pre-16S rRNA nuclease from Nitrosomonas eutropha (strain DSM 101675 / C91 / Nm57).